The following is a 496-amino-acid chain: Splicing factor U2AF 65 kDa subunit (496 aa).

The span at 1–26 shows a compositional bias: basic and acidic residues; the sequence is MSDHQDGMKLEDIERQFLDVAQREGG. Residues 1–142 are disordered; sequence MSDHQDGMKL…PKKYRFWDVP (142 aa). A compositionally biased stretch (basic residues) spans 59–77; the sequence is KKRKRSRSRDRDTRRRSRS. 2 stretches are compositionally biased toward basic and acidic residues: residues 78–96 and 105–138; these read RDRGERRGGGGGGDRDRSR and GGRDEPRRRGGDDEARSRREPEPQKPREPKKYRF. RRM domains are found at residues 184-266, 291-368, and 404-488; these read RRLY…RPRD, NKIF…LACA, and NMVT…YYDV.

Forms a heterodimer with the U2AF small subunit.

It localises to the nucleus. In terms of biological role, necessary for the splicing of pre-mRNA. Binds to the polypyrimidine tract of introns early during spliceosome assembly. This is Splicing factor U2AF 65 kDa subunit (uaf-1) from Caenorhabditis elegans.